A 206-amino-acid chain; its full sequence is Flavin reductase (NADPH) (206 aa).

Residues Gly-10, Thr-12, Gly-13, Thr-15, Arg-35, Ser-38, and Arg-39 each coordinate NADP(+). A Phosphoserine modification is found at Ser-42. Positions 54, 55, 75, and 76 each coordinate NADP(+). Ser-82 bears the Phosphoserine mark. Residues Met-87, Cys-109, His-132, His-153, and Ile-154 each contribute to the NADP(+) site. Cys-109 (S-nitroso-cysteine intermediate; for S-nitroso-CoA-dependent nitrosyltransferase activity) is an active-site residue. Catalysis depends on Cys-188, which acts as the S-nitroso-cysteine intermediate; for S-nitroso-CoA-dependent nitrosyltransferase activity.

This sequence belongs to the BLVRB family. Monomer.

Its subcellular location is the cytoplasm. The enzyme catalyses reduced riboflavin + NADP(+) = riboflavin + NADPH + 2 H(+). It carries out the reaction bilirubin IXbeta + NADP(+) = biliverdin IXbeta + NADPH + H(+). It catalyses the reaction FMNH2 + NAD(+) = FMN + NADH + 2 H(+). The catalysed reaction is FMNH2 + NADP(+) = FMN + NADPH + 2 H(+). The enzyme catalyses S-nitroso-CoA + L-cysteinyl-[protein] = S-nitroso-L-cysteinyl-[protein] + CoA. It carries out the reaction L-cysteinyl-[SCAN] + S-nitroso-CoA = S-nitroso-L-cysteinyl-[SCAN] + CoA. It catalyses the reaction S-nitroso-L-cysteinyl-[SCAN] + L-cysteinyl-[protein] = L-cysteinyl-[SCAN] + S-nitroso-L-cysteinyl-[protein]. Enzyme that can both act as a NAD(P)H-dependent reductase and a S-nitroso-CoA-dependent nitrosyltransferase. Promotes fetal heme degradation during development. Also expressed in adult tissues, where it acts as a regulator of hematopoiesis, intermediary metabolism (glutaminolysis, glycolysis, TCA cycle and pentose phosphate pathway) and insulin signaling. Has a broad specificity oxidoreductase activity by catalyzing the NAD(P)H-dependent reduction of a variety of flavins, such as riboflavin, FAD or FMN, biliverdins, methemoglobin and PQQ (pyrroloquinoline quinone). Contributes to fetal heme catabolism by catalyzing reduction of biliverdin IXbeta into bilirubin IXbeta in the liver. Biliverdin IXbeta, which constitutes the major heme catabolite in the fetus is not present in adult. Does not reduce bilirubin IXalpha. Can also reduce the complexed Fe(3+) iron to Fe(2+) in the presence of FMN and NADPH. Acts as a protein nitrosyltransferase by catalyzing nitrosylation of cysteine residues of target proteins, such as HMOX2, INSR and IRS1. S-nitroso-CoA-dependent nitrosyltransferase activity is mediated via a 'ping-pong' mechanism: BLVRB first associates with both S-nitroso-CoA and protein substrate, nitric oxide group is then transferred from S-nitroso-CoA to Cys-109 and Cys-188 residues of BLVRB and from S-nitroso-BLVRB to the protein substrate. Inhibits insulin signaling by mediating nitrosylation of INSR and IRS1, leading to their inhibition. This is Flavin reductase (NADPH) (Blvrb) from Mus musculus (Mouse).